The chain runs to 566 residues: Sister chromatid cohesion protein 1 (566 aa).

Phosphoserine is present on serine 161. Serine 175 carries the post-translational modification Phosphoserine; by CDC5. Lysine 210 carries the N6-acetyllysine; by ECO1 modification. Phosphoserine; by CDC5 is present on serine 263. The residue at position 307 (serine 307) is a Phosphoserine. A disordered region spans residues serine 325–glutamine 356. A Phosphothreonine modification is found at threonine 354.

This sequence belongs to the rad21 family. As to quaternary structure, interacts directly with IRR1/SCC3 in cohesin complex. Cohesin complexes are composed of the SMC1 and SMC3 heterodimer attached via their hinge domain, MCD1/SCC1 which link them, and IRR1, which interacts with MCD1. The cohesin complex also interacts with SCC2, which is required for its association with chromosomes. Post-translationally, cleaved by ESP1 at the onset of anaphase. Phosphorylated by CDC5/Polo-like kinase at the onset of anaphase. Phosphorylation takes places at proximity to cleavage sites and is required for an efficient cleavage by ESP1. In terms of processing, acetylated by ECO1.

Its subcellular location is the nucleus. It is found in the chromosome. The protein localises to the centromere. Functionally, cleavable component of the cohesin complex involved in chromosome cohesion during cell cycle. The cohesin complex is required for the cohesion of sister chromatids after DNA replication. The cohesin complex apparently forms a large proteinaceous ring within which sister chromatids can be trapped. At metaphase-anaphase transition, this protein is cleaved by ESP1 and dissociates from chromatin, allowing sister chromatids to segregate. The polypeptide is Sister chromatid cohesion protein 1 (MCD1) (Saccharomyces cerevisiae (strain ATCC 204508 / S288c) (Baker's yeast)).